Reading from the N-terminus, the 331-residue chain is Smad-related protein daf-14 (331 aa).

An MH2 domain is found at 134–331 (WCTIFYYELT…NERPEIGSRS (198 aa)). Residues 168 to 187 (ECRMSLTSQPSSRNSKSSQI) form a disordered region. Low complexity predominate over residues 175-185 (SQPSSRNSKSS).

In terms of assembly, interacts with R-SMAD daf-8 and co-SMAD daf-3. Interacts with daf-3 in a daf-8 dependent manner.

Probably an atypical receptor-regulated SMAD (R-SMAD) that is an intracellular signal transducer and transcriptional modulator activated by TGF-beta-like daf-7 signaling. Plays a role in TGF-beta-like daf-7 signaling in regulating entry into a developmentally arrested larval state known as dauer, in response to harsh environmental conditions; partially redundant with R-SMAD daf-8. This chain is Smad-related protein daf-14, found in Caenorhabditis elegans.